Reading from the N-terminus, the 491-residue chain is Angiopoietin-related protein 1 (491 aa).

The N-terminal stretch at M1–G23 is a signal peptide. Residues I80–M168 are a coiled coil. N160 and N188 each carry an N-linked (GlcNAc...) asparagine glycan. One can recognise a Fibrinogen C-terminal domain in the interval F271–D491. 2 disulfides stabilise this stretch: C280–C309 and C432–C445.

As to expression, highly expressed in adrenal gland, placenta, thyroid gland, heart, skeletal muscle and small intestine. Weakly expressed in testis, ovary, colon, pancreas, kidney and stomach.

It is found in the secreted. The protein is Angiopoietin-related protein 1 (ANGPTL1) of Homo sapiens (Human).